We begin with the raw amino-acid sequence, 331 residues long: MEIIKISPRGYCYGVIDAMVIAKNASLDPNLPRPIHILGMIVHNKHVTDAFESIGIYTVDGANREEILDKITTGTVIFTAHGVSPSVKAKAVAKGLTTIDATCPDVLHTYNLILEKQAAGYEIIYIGKKGHPEPEGAYGTAPDVVHLVETKADIDALSLLSDKIFVTNQTTMSKWDVADLMHYIKGKFPKAIQHQEICMATQVRQEAVALQAKDADLTIVVGDPRSNNTARLAQVSIEKAGTKAYRIADITELDIEWIKDAKKVAVTAGASTPTQLVREVLLFLEQFDAADKTTWKREHNQDFERILPKTKNKYMAEKRSQRLAHLKNGGS.

Cys12 provides a ligand contact to [4Fe-4S] cluster. Residues His43 and His81 each coordinate (2E)-4-hydroxy-3-methylbut-2-enyl diphosphate. Dimethylallyl diphosphate is bound by residues His43 and His81. Residues His43 and His81 each contribute to the isopentenyl diphosphate site. Residue Cys103 coordinates [4Fe-4S] cluster. Position 131 (His131) interacts with (2E)-4-hydroxy-3-methylbut-2-enyl diphosphate. His131 contributes to the dimethylallyl diphosphate binding site. Residue His131 coordinates isopentenyl diphosphate. Glu133 serves as the catalytic Proton donor. Thr170 provides a ligand contact to (2E)-4-hydroxy-3-methylbut-2-enyl diphosphate. Cys198 provides a ligand contact to [4Fe-4S] cluster. 3 residues coordinate (2E)-4-hydroxy-3-methylbut-2-enyl diphosphate: Ser226, Asn228, and Ser271. Ser226, Asn228, and Ser271 together coordinate dimethylallyl diphosphate. Isopentenyl diphosphate is bound by residues Ser226, Asn228, and Ser271.

Belongs to the IspH family. [4Fe-4S] cluster is required as a cofactor.

The catalysed reaction is isopentenyl diphosphate + 2 oxidized [2Fe-2S]-[ferredoxin] + H2O = (2E)-4-hydroxy-3-methylbut-2-enyl diphosphate + 2 reduced [2Fe-2S]-[ferredoxin] + 2 H(+). It carries out the reaction dimethylallyl diphosphate + 2 oxidized [2Fe-2S]-[ferredoxin] + H2O = (2E)-4-hydroxy-3-methylbut-2-enyl diphosphate + 2 reduced [2Fe-2S]-[ferredoxin] + 2 H(+). It participates in isoprenoid biosynthesis; dimethylallyl diphosphate biosynthesis; dimethylallyl diphosphate from (2E)-4-hydroxy-3-methylbutenyl diphosphate: step 1/1. It functions in the pathway isoprenoid biosynthesis; isopentenyl diphosphate biosynthesis via DXP pathway; isopentenyl diphosphate from 1-deoxy-D-xylulose 5-phosphate: step 6/6. Its function is as follows. Catalyzes the conversion of 1-hydroxy-2-methyl-2-(E)-butenyl 4-diphosphate (HMBPP) into a mixture of isopentenyl diphosphate (IPP) and dimethylallyl diphosphate (DMAPP). Acts in the terminal step of the DOXP/MEP pathway for isoprenoid precursor biosynthesis. In Listeria monocytogenes serovar 1/2a (strain ATCC BAA-679 / EGD-e), this protein is 4-hydroxy-3-methylbut-2-enyl diphosphate reductase.